The chain runs to 275 residues: Large ribosomal subunit protein uL2 (275 aa).

2 disordered regions span residues Met1–Ile24 and Ala208–Arg275. The segment covering Gly12 to Ser22 has biased composition (polar residues). Basic residues-rich tracts occupy residues Ala208–Gln219 and Leu255–Arg275.

Belongs to the universal ribosomal protein uL2 family. As to quaternary structure, part of the 50S ribosomal subunit. Forms a bridge to the 30S subunit in the 70S ribosome.

One of the primary rRNA binding proteins. Required for association of the 30S and 50S subunits to form the 70S ribosome, for tRNA binding and peptide bond formation. It has been suggested to have peptidyltransferase activity; this is somewhat controversial. Makes several contacts with the 16S rRNA in the 70S ribosome. The polypeptide is Large ribosomal subunit protein uL2 (Picosynechococcus sp. (strain ATCC 27264 / PCC 7002 / PR-6) (Agmenellum quadruplicatum)).